Consider the following 92-residue polypeptide: Small ribosomal subunit protein uS19 (92 aa).

It belongs to the universal ribosomal protein uS19 family.

Functionally, protein S19 forms a complex with S13 that binds strongly to the 16S ribosomal RNA. The polypeptide is Small ribosomal subunit protein uS19 (Listeria innocua serovar 6a (strain ATCC BAA-680 / CLIP 11262)).